Reading from the N-terminus, the 313-residue chain is Beta-ketoacyl-[acyl-carrier-protein] synthase III (313 aa).

Catalysis depends on residues cysteine 112 and histidine 238. An ACP-binding region spans residues 239 to 243 (QANIR). Asparagine 268 is an active-site residue.

This sequence belongs to the thiolase-like superfamily. FabH family. As to quaternary structure, homodimer.

It is found in the cytoplasm. The catalysed reaction is malonyl-[ACP] + acetyl-CoA + H(+) = 3-oxobutanoyl-[ACP] + CO2 + CoA. It participates in lipid metabolism; fatty acid biosynthesis. Its function is as follows. Catalyzes the condensation reaction of fatty acid synthesis by the addition to an acyl acceptor of two carbons from malonyl-ACP. Catalyzes the first condensation reaction which initiates fatty acid synthesis and may therefore play a role in governing the total rate of fatty acid production. Possesses both acetoacetyl-ACP synthase and acetyl transacylase activities. Its substrate specificity determines the biosynthesis of branched-chain and/or straight-chain of fatty acids. The sequence is that of Beta-ketoacyl-[acyl-carrier-protein] synthase III from Staphylococcus saprophyticus subsp. saprophyticus (strain ATCC 15305 / DSM 20229 / NCIMB 8711 / NCTC 7292 / S-41).